The primary structure comprises 234 residues: DNA repair and recombination protein RadB (234 aa).

It belongs to the eukaryotic RecA-like protein family. RadB subfamily.

Its function is as follows. Involved in DNA repair and in homologous recombination. May regulate the cleavage reactions of the branch-structured DNA. Has a very weak ATPase activity that is not stimulated by DNA. Binds DNA but does not promote DNA strands exchange. This Methanobrevibacter smithii (strain ATCC 35061 / DSM 861 / OCM 144 / PS) protein is DNA repair and recombination protein RadB.